Consider the following 539-residue polypeptide: Putative serine/threonine-protein kinase L670 (539 aa).

The Cyclin N-terminal domain occupies 1-115; it reads MSLFNNHPEL…ILKVFKFGLH (115 aa). The Protein kinase domain occupies 258–519; it reads MNVIEKLGIG…VLKIFSECFV (262 aa). Residues 264–272 and Lys285 contribute to the ATP site; that span reads LGIGSFGLV. The Proton acceptor role is filled by Asp375.

It belongs to the protein kinase superfamily. Ser/Thr protein kinase family.

The enzyme catalyses L-seryl-[protein] + ATP = O-phospho-L-seryl-[protein] + ADP + H(+). It catalyses the reaction L-threonyl-[protein] + ATP = O-phospho-L-threonyl-[protein] + ADP + H(+). The chain is Putative serine/threonine-protein kinase L670 from Acanthamoeba polyphaga mimivirus (APMV).